We begin with the raw amino-acid sequence, 346 residues long: Biotin synthase (346 aa).

One can recognise a Radical SAM core domain in the interval 38–256 (QQVQVSTLLS…IAVARIMMPT (219 aa)). C53, C57, and C60 together coordinate [4Fe-4S] cluster. Residues C97, C128, C188, and R260 each contribute to the [2Fe-2S] cluster site.

It belongs to the radical SAM superfamily. Biotin synthase family. In terms of assembly, homodimer. Requires [4Fe-4S] cluster as cofactor. [2Fe-2S] cluster is required as a cofactor.

The enzyme catalyses (4R,5S)-dethiobiotin + (sulfur carrier)-SH + 2 reduced [2Fe-2S]-[ferredoxin] + 2 S-adenosyl-L-methionine = (sulfur carrier)-H + biotin + 2 5'-deoxyadenosine + 2 L-methionine + 2 oxidized [2Fe-2S]-[ferredoxin]. Its pathway is cofactor biosynthesis; biotin biosynthesis; biotin from 7,8-diaminononanoate: step 2/2. Functionally, catalyzes the conversion of dethiobiotin (DTB) to biotin by the insertion of a sulfur atom into dethiobiotin via a radical-based mechanism. This Citrobacter koseri (strain ATCC BAA-895 / CDC 4225-83 / SGSC4696) protein is Biotin synthase.